The chain runs to 876 residues: Alanine--tRNA ligase (876 aa).

Zn(2+)-binding residues include His560, His564, Cys662, and His666.

This sequence belongs to the class-II aminoacyl-tRNA synthetase family. Requires Zn(2+) as cofactor.

Its subcellular location is the cytoplasm. It catalyses the reaction tRNA(Ala) + L-alanine + ATP = L-alanyl-tRNA(Ala) + AMP + diphosphate. Functionally, catalyzes the attachment of alanine to tRNA(Ala) in a two-step reaction: alanine is first activated by ATP to form Ala-AMP and then transferred to the acceptor end of tRNA(Ala). Also edits incorrectly charged Ser-tRNA(Ala) and Gly-tRNA(Ala) via its editing domain. In Synechococcus sp. (strain ATCC 27144 / PCC 6301 / SAUG 1402/1) (Anacystis nidulans), this protein is Alanine--tRNA ligase.